Reading from the N-terminus, the 387-residue chain is Protein RecA (387 aa).

Gly80 to Thr87 is an ATP binding site. The tract at residues Leu348–Asp387 is disordered. Acidic residues-rich tracts occupy residues Asp349–Thr360 and Thr378–Asp387.

The protein belongs to the RecA family.

The protein resides in the cytoplasm. Its function is as follows. Can catalyze the hydrolysis of ATP in the presence of single-stranded DNA, the ATP-dependent uptake of single-stranded DNA by duplex DNA, and the ATP-dependent hybridization of homologous single-stranded DNAs. It interacts with LexA causing its activation and leading to its autocatalytic cleavage. The polypeptide is Protein RecA (Lactococcus lactis subsp. cremoris (Streptococcus cremoris)).